We begin with the raw amino-acid sequence, 151 residues long: Ribosome maturation factor RimP (151 aa).

The protein belongs to the RimP family.

It localises to the cytoplasm. In terms of biological role, required for maturation of 30S ribosomal subunits. The polypeptide is Ribosome maturation factor RimP (Nitrosococcus oceani (strain ATCC 19707 / BCRC 17464 / JCM 30415 / NCIMB 11848 / C-107)).